A 513-amino-acid chain; its full sequence is 2,3-bisphosphoglycerate-independent phosphoglycerate mutase (513 aa).

Residues Asp-13 and Ser-63 each contribute to the Mn(2+) site. The active-site Phosphoserine intermediate is the Ser-63. Substrate-binding positions include His-124, 154-155 (RD), Arg-186, Arg-192, 262-265 (RADR), and Lys-335. Residues Asp-403, His-407, Asp-444, His-445, and His-463 each contribute to the Mn(2+) site.

Belongs to the BPG-independent phosphoglycerate mutase family. Monomer. Mn(2+) serves as cofactor.

The enzyme catalyses (2R)-2-phosphoglycerate = (2R)-3-phosphoglycerate. Its pathway is carbohydrate degradation; glycolysis; pyruvate from D-glyceraldehyde 3-phosphate: step 3/5. In terms of biological role, catalyzes the interconversion of 2-phosphoglycerate and 3-phosphoglycerate. The polypeptide is 2,3-bisphosphoglycerate-independent phosphoglycerate mutase (Myxococcus xanthus (strain DK1622)).